The sequence spans 204 residues: Putative peroxiredoxin ycf42 (204 aa).

The Thioredoxin domain maps to 5–163 (PKIGKTPPNF…LLRILESIQY (159 aa)).

It belongs to the peroxiredoxin family. AhpC/Prx1 subfamily.

The protein resides in the plastid. Its subcellular location is the chloroplast. The catalysed reaction is a hydroperoxide + [protein]-dithiol = [protein]-disulfide + an alcohol + H2O. In Trieres chinensis (Marine centric diatom), this protein is Putative peroxiredoxin ycf42 (ycf42).